We begin with the raw amino-acid sequence, 417 residues long: S-adenosylmethionine synthase (417 aa).

Position 16 (His-16) interacts with ATP. Residue Asp-18 coordinates Mg(2+). Glu-44 is a binding site for K(+). L-methionine-binding residues include Glu-57 and Gln-100. The tract at residues 100 to 110 (QSPDIAQGVDT) is flexible loop. ATP-binding positions include 175–177 (DGK), 251–252 (KF), Asp-260, 266–267 (RK), Ala-283, and Lys-287. Residue Asp-260 coordinates L-methionine. Lys-291 provides a ligand contact to L-methionine.

The protein belongs to the AdoMet synthase family. As to quaternary structure, homotetramer; dimer of dimers. Mg(2+) is required as a cofactor. K(+) serves as cofactor.

The protein localises to the cytoplasm. The catalysed reaction is L-methionine + ATP + H2O = S-adenosyl-L-methionine + phosphate + diphosphate. It functions in the pathway amino-acid biosynthesis; S-adenosyl-L-methionine biosynthesis; S-adenosyl-L-methionine from L-methionine: step 1/1. Its function is as follows. Catalyzes the formation of S-adenosylmethionine (AdoMet) from methionine and ATP. The overall synthetic reaction is composed of two sequential steps, AdoMet formation and the subsequent tripolyphosphate hydrolysis which occurs prior to release of AdoMet from the enzyme. The protein is S-adenosylmethionine synthase of Synechococcus elongatus (strain ATCC 33912 / PCC 7942 / FACHB-805) (Anacystis nidulans R2).